A 63-amino-acid chain; its full sequence is uncharacterized protein (63 aa).

This is an uncharacterized protein from Bacillus subtilis (strain 168).